We begin with the raw amino-acid sequence, 422 residues long: Tyrosine--tRNA ligase (422 aa).

Tyr36 lines the L-tyrosine pocket. Positions 41-50 (PTAGSLHIGH) match the 'HIGH' region motif. Tyr174 and Gln178 together coordinate L-tyrosine. The 'KMSKS' region motif lies at 234-238 (KFGKT). ATP is bound at residue Lys237. The region spanning 356–420 (TDLVTLLVES…GKKQYRLVTW (65 aa)) is the S4 RNA-binding domain.

This sequence belongs to the class-I aminoacyl-tRNA synthetase family. TyrS type 1 subfamily. Homodimer.

It is found in the cytoplasm. It catalyses the reaction tRNA(Tyr) + L-tyrosine + ATP = L-tyrosyl-tRNA(Tyr) + AMP + diphosphate + H(+). Its function is as follows. Catalyzes the attachment of tyrosine to tRNA(Tyr) in a two-step reaction: tyrosine is first activated by ATP to form Tyr-AMP and then transferred to the acceptor end of tRNA(Tyr). This is Tyrosine--tRNA ligase from Aeromonas hydrophila subsp. hydrophila (strain ATCC 7966 / DSM 30187 / BCRC 13018 / CCUG 14551 / JCM 1027 / KCTC 2358 / NCIMB 9240 / NCTC 8049).